We begin with the raw amino-acid sequence, 122 residues long: Large ribosomal subunit protein uL14 (122 aa).

The protein belongs to the universal ribosomal protein uL14 family. Part of the 50S ribosomal subunit. Forms a cluster with proteins L3 and L19. In the 70S ribosome, L14 and L19 interact and together make contacts with the 16S rRNA in bridges B5 and B8.

Binds to 23S rRNA. Forms part of two intersubunit bridges in the 70S ribosome. This Clostridium tetani (strain Massachusetts / E88) protein is Large ribosomal subunit protein uL14.